We begin with the raw amino-acid sequence, 545 residues long: Calcium-binding mitochondrial carrier SAL1 (545 aa).

The EF-hand 1 domain maps to 11–46; it reads QRDIRYACLFKELDVKGNGQVTLDNLISAFEKNDHP. Ca(2+) contacts are provided by lysine 65, aspartate 70, aspartate 93, aspartate 95, aspartate 97, lysine 99, and glutamate 104. EF-hand domains follow at residues 80–115, 120–155, and 156–191; these read NAESQIWNGFQRIDLDHDGKIGINEINRYLSDLDNQ, NELNHELSNEKMNKFSRFFEWAFPKRKANIALRGQA, and SHKKNTDNDRSKKTTDSDLYVTYDQWRDFLLLVPRK. Threonine 161 and serine 166 together coordinate Ca(2+). Solcar repeat units follow at residues 225–332, 345–434, and 452–541; these read IRGF…TKKI, LSKF…LKKW, and LSNL…LKKF. The next 6 helical transmembrane spans lie at 231–248, 307–326, 355–368, 409–428, 458–475, and 516–535; these read FIAGGISGVISRTCTAPF, GNGLNVIKVFPESSIKFGSF, GLAGMAAQFSVYPI, GVTVGIVGIFPYAALDLGTF, LPMGAFSGTVGASVVYPI, and GLVPTLAKVCPAVSISYLCY.

It belongs to the mitochondrial carrier (TC 2.A.29) family.

It is found in the mitochondrion inner membrane. Calcium-dependent mitochondrial solute carrier. The protein is Calcium-binding mitochondrial carrier SAL1 (SAL1) of Saccharomyces cerevisiae (Baker's yeast).